Consider the following 765-residue polypeptide: Zinc finger and BTB domain-containing protein 49 (765 aa).

A BTB domain is found at 25–91; sequence CDCMLVVKGV…MYTSHLDLNQ (67 aa). 2 disordered regions span residues 165–203 and 275–294; these read QQNKTLDESHPHASPSVNRHHSAGEISKQAPDTSDGSCT and NFLAQPVNDSAPHPESDATC. 7 consecutive C2H2-type zinc fingers follow at residues 395-417, 423-445, 451-473, 479-501, 507-529, 535-557, and 563-585; these read YACELCGKPFKHPSNLELHKRSH, FECNICGKHFSQAGNLQTHLRRH, YICEICGKRFAASGDVQRHIIIH, HLCDICGRGFSNFSNLKEHKKTH, FTCDECGKSFNMQRKLVKHRIRH, YSCSACGKCFGGSGDLRRHVRTH, and YTCEICNKCFTRSAVLRRHKKMH.

It belongs to the krueppel C2H2-type zinc-finger protein family. As to quaternary structure, isoform 1 interacts with EP300 and KAT5/Tip60. The interaction with EP300 is direct and leads to synergistic induction of CDKN1A. On the CDKN1A promoter, forms a complex with ZBTB17/Miz-1; this interaction leads to additive CDKN1A transactivation. Isoform 3 also interacts with ZBTB17; this interaction may block ZBTB17 repressor activity. In terms of tissue distribution, highly expressed in normal epidermis and in other epithelial tissues, including in colon and lung. Tends to be down-regulated in colon, lung and skin cancer tissues.

The protein resides in the cytoplasm. Its subcellular location is the nucleus. Functionally, transcription factor. Inhibits cell proliferation by activating either CDKN1A/p21 transcription or RB1 transcription. Its function is as follows. Binds CDKN1A promoter and activates its transcription; this activity is further potentiated in the presence of EP300 (synergistic) and ZBTB17/Miz-1 (additive). Activates RB1 transcription most probably by antagonizing ZBTB17 repression of RB1. Does not bind directly RB1 promoter. The protein is Zinc finger and BTB domain-containing protein 49 (ZBTB49) of Homo sapiens (Human).